We begin with the raw amino-acid sequence, 366 residues long: uncharacterized protein (366 aa).

The disordered stretch occupies residues 1-135 (MNQTGRTIGG…PPKNVDTIDK (135 aa)). Basic and acidic residues predominate over residues 26–38 (PSEDRVSSRDETP). Position 69 is a phosphoserine (S69). T76 carries the phosphothreonine modification. A Glycyl lysine isopeptide (Lys-Gly) (interchain with G-Cter in ubiquitin) cross-link involves residue K78. Residues 97-108 (QHNHHHHRRTSH) show a composition bias toward basic residues. K187 is covalently cross-linked (Glycyl lysine isopeptide (Lys-Gly) (interchain with G-Cter in ubiquitin)). T189 carries the phosphothreonine modification. A Glycyl lysine isopeptide (Lys-Gly) (interchain with G-Cter in ubiquitin) cross-link involves residue K242. Phosphoserine occurs at positions 288 and 294. A disordered region spans residues 313-366 (THSGHLEQKDVDDNRTSVPVTATQGSGHEDVVKKENTGNKLLRRVKSLKTSKKH). Residues 316-327 (GHLEQKDVDDNR) are compositionally biased toward basic and acidic residues. Over residues 328 to 338 (TSVPVTATQGS) the composition is skewed to polar residues. Basic and acidic residues predominate over residues 339 to 349 (GHEDVVKKENT). The span at 353–366 (LLRRVKSLKTSKKH) shows a compositional bias: basic residues. Residue S359 is modified to Phosphoserine.

Belongs to the pal1 family.

Its subcellular location is the cytoplasm. It localises to the nucleus. This is an uncharacterized protein from Saccharomyces cerevisiae (strain ATCC 204508 / S288c) (Baker's yeast).